The following is a 253-amino-acid chain: MPKLQLSELLSLNKVEQILRLAEINTELEQLTAQERVSWALDNLEGKPAVSSSFGIQAAVMLQLVTDVKSDTPVILTDTGYLFPETYQFIDTLTERLNLNLQVFTADETPMWQEARYGKLWEQGVDGLKHYNRLNKVQPMRRALDQLQVGVWFSGLRRDQSSSRSHLPILSIQNGVFKFLPVIDWSNQEVHYYLEEKGLPYHPLRDEGYLSVGDTHTTQKWEPGMKEEDTRFFGLKRECGLHEDDAEAEGSGI.

Catalysis depends on Cys239, which acts as the Nucleophile; cysteine thiosulfonate intermediate.

Belongs to the PAPS reductase family. CysH subfamily.

It localises to the cytoplasm. It catalyses the reaction [thioredoxin]-disulfide + sulfite + adenosine 3',5'-bisphosphate + 2 H(+) = [thioredoxin]-dithiol + 3'-phosphoadenylyl sulfate. Its pathway is sulfur metabolism; hydrogen sulfide biosynthesis; sulfite from sulfate: step 3/3. In terms of biological role, catalyzes the formation of sulfite from phosphoadenosine 5'-phosphosulfate (PAPS) using thioredoxin as an electron donor. This is Phosphoadenosine 5'-phosphosulfate reductase from Aliivibrio salmonicida (strain LFI1238) (Vibrio salmonicida (strain LFI1238)).